Reading from the N-terminus, the 197-residue chain is Dehydrin DHN1 (197 aa).

The segment covering 1–14 (MSQYQNQYGAQTGM) has biased composition (polar residues). Disordered stretches follow at residues 1–86 (MSQY…GTNP) and 133–197 (GTEQ…CTGH). A run of 2 repeats spans residues 16–21 (DEYGNP) and 26–31 (DQYGNP). The segment at 16–31 (DEYGNPVNQVDQYGNP) is 2 X approximate repeats. Residues 74–83 (THTGGVGGYG) show a composition bias toward gly residues. Residues 126 to 133 (KIKEKIPG) form a 2-1 repeat. The interval 126–190 (KIKEKIPGTE…MDKIKEKLPG (65 aa)) is 2 X approximate repeats. Residues 144–160 (AGYGSTGYGASGGGIGN) show a composition bias toward gly residues. The segment covering 165-188 (YVREEHRVDHGEKKGIMDKIKEKL) has biased composition (basic and acidic residues). The 2-2 repeat unit spans residues 183–190 (KIKEKLPG).

Belongs to the plant dehydrin family. Shoots, roots, and cotyledon from dehydrating seedlings.

The protein is Dehydrin DHN1 (DHN1) of Pisum sativum (Garden pea).